A 65-amino-acid polypeptide reads, in one-letter code: Large ribosomal subunit protein bL35 (65 aa).

Belongs to the bacterial ribosomal protein bL35 family.

This is Large ribosomal subunit protein bL35 from Magnetococcus marinus (strain ATCC BAA-1437 / JCM 17883 / MC-1).